A 324-amino-acid chain; its full sequence is tRNA-modifying protein YgfZ (324 aa).

A folate-binding site is contributed by W184.

Belongs to the tRNA-modifying YgfZ family.

Its subcellular location is the cytoplasm. In terms of biological role, folate-binding protein involved in regulating the level of ATP-DnaA and in the modification of some tRNAs. It is probably a key factor in regulatory networks that act via tRNA modification, such as initiation of chromosomal replication. The chain is tRNA-modifying protein YgfZ from Vibrio vulnificus (strain CMCP6).